The primary structure comprises 497 residues: Serine/arginine-rich protein PSR (497 aa).

Residues 1-19 (MYSRCIALVFVGLLASSLA) form the signal peptide. Residues 20–366 (ANCYGPAGKL…HHGLSSQKLG (347 aa)) are Extracellular-facing. Asparagine 92, asparagine 193, asparagine 202, asparagine 261, and asparagine 283 each carry an N-linked (GlcNAc...) asparagine glycan. A helical membrane pass occupies residues 367–387 (LAIGLPIAGVFLIILIAAAII). Over 388–497 (YYRKRRESEK…ESASRDSDSD (110 aa)) the chain is Cytoplasmic. Residues 424 to 450 (MGSKTMQAMLDMRDDDESEHDSDDGYG) form a necessary for phosphorylation by PSRPK in vitro region. A compositionally biased stretch (acidic residues) spans 436 to 447 (RDDDESEHDSDD). Residues 436-497 (RDDDESEHDS…ESASRDSDSD (62 aa)) form a disordered region. Basic residues predominate over residues 459–471 (GRSRSRSRSRSVS). The span at 476–497 (GSRDARSESDPGESASRDSDSD) shows a compositional bias: basic and acidic residues.

In terms of processing, phosphorylated on serine residues in the RS domain by PSRPK.

It is found in the membrane. This is Serine/arginine-rich protein PSR from Physarum polycephalum (Slime mold).